The sequence spans 570 residues: Zinc finger protein 76 (570 aa).

A Glycyl lysine isopeptide (Lys-Gly) (interchain with G-Cter in SUMO2) cross-link involves residue K24. 3 repeat units span residues 34–45 (IQLEDGTTAYIH), 62–73 (VQLEDGSMAYIH), and 88–99 (VQLEDGSTAYIH). A 3 X 12 AA approximate repeats region spans residues 34 to 99 (IQLEDGTTAY…LEDGSTAYIH (66 aa)). 7 C2H2-type zinc fingers span residues 165–189 (FRCG…ERAH), 195–219 (YRCD…VRTH), 225–249 (YKCP…VRTH), 255–279 (FQCP…VRTH), 285–309 (YTCP…VRIH), 315–339 (YVCT…HVVH), and 345–368 (YTCS…RSAH). The interval 365-401 (RSAHGELEATEESEQALYEQQQLEAASAAEESPPPKR) is disordered. The span at 379 to 395 (QALYEQQQLEAASAAEE) shows a compositional bias: low complexity.

This sequence belongs to the krueppel C2H2-type zinc-finger protein family. Testis.

It is found in the nucleus. Its function is as follows. May be involved in transcriptional regulation. The protein is Zinc finger protein 76 (ZNF76) of Homo sapiens (Human).